The chain runs to 399 residues: Elongation factor Tu (399 aa).

In terms of domain architecture, tr-type G spans 10 to 209 (KPHVNIGTIG…EVDAYIPTPE (200 aa)). Residues 19 to 26 (GHVDHGKT) are G1. 19–26 (GHVDHGKT) provides a ligand contact to GTP. Thr-26 contacts Mg(2+). The tract at residues 60–64 (GITIA) is G2. Positions 81–84 (DCPG) are G3. Residues 81–85 (DCPGH) and 136–139 (NKQD) each bind GTP. The interval 136 to 139 (NKQD) is G4. The interval 174–176 (SAL) is G5.

It belongs to the TRAFAC class translation factor GTPase superfamily. Classic translation factor GTPase family. EF-Tu/EF-1A subfamily. Monomer.

It is found in the cytoplasm. It carries out the reaction GTP + H2O = GDP + phosphate + H(+). GTP hydrolase that promotes the GTP-dependent binding of aminoacyl-tRNA to the A-site of ribosomes during protein biosynthesis. This is Elongation factor Tu from Helicobacter pylori (strain Shi470).